The primary structure comprises 319 residues: ATP-dependent 6-phosphofructokinase (319 aa).

Gly11 contacts ATP. Arg21 to Arg25 contributes to the ADP binding site. ATP contacts are provided by residues Arg72 to Phe73 and Gly102 to Ser105. Asp103 is a Mg(2+) binding site. Ser125–Asp127 lines the substrate pocket. Asp127 (proton acceptor) is an active-site residue. Arg154 serves as a coordination point for ADP. Residues Arg162 and Met169–Arg171 contribute to the substrate site. Residues Gly185–Asp187 and Lys213–His215 contribute to the ADP site. Residues Glu222, Arg243, and His249 to Arg252 each bind substrate.

This sequence belongs to the phosphofructokinase type A (PFKA) family. ATP-dependent PFK group I subfamily. Prokaryotic clade 'B1' sub-subfamily. Homotetramer. Mg(2+) is required as a cofactor.

Its subcellular location is the cytoplasm. The enzyme catalyses beta-D-fructose 6-phosphate + ATP = beta-D-fructose 1,6-bisphosphate + ADP + H(+). It participates in carbohydrate degradation; glycolysis; D-glyceraldehyde 3-phosphate and glycerone phosphate from D-glucose: step 3/4. Its activity is regulated as follows. Allosterically activated by ADP and other diphosphonucleosides, and allosterically inhibited by phosphoenolpyruvate. Its function is as follows. Catalyzes the phosphorylation of D-fructose 6-phosphate to fructose 1,6-bisphosphate by ATP, the first committing step of glycolysis. The sequence is that of ATP-dependent 6-phosphofructokinase from Lactobacillus johnsonii (strain CNCM I-12250 / La1 / NCC 533).